The sequence spans 446 residues: Carbamoyl phosphate synthase small chain, chloroplastic (446 aa).

A compositionally biased stretch (low complexity) spans Met-1–Ser-32. Residues Met-1 to Gly-44 are disordered. Residues Met-1 to Arg-50 constitute a chloroplast transit peptide. Residues His-261 to Leu-446 form the Glutamine amidotransferase type-1 domain. Catalysis depends on Cys-336, which acts as the Nucleophile. Active-site residues include His-420 and Glu-422.

This sequence belongs to the CarA family. Heterodimer composed of 2 chains; the small (or glutamine) chain promotes the hydrolysis of glutamine to ammonia, which is used by the large (or ammonia) chain to synthesize carbamoyl phosphate.

It localises to the plastid. Its subcellular location is the chloroplast. The enzyme catalyses hydrogencarbonate + L-glutamine + 2 ATP + H2O = carbamoyl phosphate + L-glutamate + 2 ADP + phosphate + 2 H(+). The catalysed reaction is L-glutamine + H2O = L-glutamate + NH4(+). Its pathway is amino-acid biosynthesis; L-arginine biosynthesis; carbamoyl phosphate from bicarbonate: step 1/1. It participates in pyrimidine metabolism; UMP biosynthesis via de novo pathway; (S)-dihydroorotate from bicarbonate: step 1/3. Functionally, small subunit of the arginine-specific carbamoyl phosphate synthase (CPSase). CPSase catalyzes the formation of carbamoyl phosphate from the ammonia moiety of glutamine, carbonate, and phosphate donated by ATP, the first step of the arginine biosynthetic pathway. The small subunit (glutamine amidotransferase) binds and cleaves glutamine to supply the large subunit with the substrate ammonia. This is Carbamoyl phosphate synthase small chain, chloroplastic (CARA) from Oryza sativa subsp. japonica (Rice).